The primary structure comprises 461 residues: Cysteine--tRNA ligase (461 aa).

Residue Cys28 participates in Zn(2+) binding. The 'HIGH' region motif lies at 30–40; it reads VTIYDLCHIGH. Zn(2+)-binding residues include Cys211, His236, and Glu240. Positions 268-272 match the 'KMSKS' region motif; it reads KMSKS. Lys271 lines the ATP pocket.

The protein belongs to the class-I aminoacyl-tRNA synthetase family. As to quaternary structure, monomer. It depends on Zn(2+) as a cofactor.

Its subcellular location is the cytoplasm. The enzyme catalyses tRNA(Cys) + L-cysteine + ATP = L-cysteinyl-tRNA(Cys) + AMP + diphosphate. The protein is Cysteine--tRNA ligase of Aliivibrio fischeri (strain ATCC 700601 / ES114) (Vibrio fischeri).